We begin with the raw amino-acid sequence, 427 residues long: Peptidase B (427 aa).

Positions 195 and 200 each coordinate Mn(2+). Lysine 207 is an active-site residue. Mn(2+)-binding residues include aspartate 218, aspartate 277, and glutamate 279. Arginine 281 is an active-site residue.

Belongs to the peptidase M17 family. As to quaternary structure, homohexamer. It depends on Mn(2+) as a cofactor.

Its subcellular location is the cytoplasm. It catalyses the reaction Release of an N-terminal amino acid, Xaa, from a peptide or arylamide. Xaa is preferably Glu or Asp but may be other amino acids, including Leu, Met, His, Cys and Gln.. Functionally, probably plays an important role in intracellular peptide degradation. The chain is Peptidase B from Citrobacter koseri (strain ATCC BAA-895 / CDC 4225-83 / SGSC4696).